Here is a 395-residue protein sequence, read N- to C-terminus: Multidrug resistance protein MdtL (395 aa).

12 helical membrane-spanning segments follow: residues 4–24 (FLLC…MYLV), 42–62 (IAFS…GKIA), 69–89 (PVAI…SRAS), 93–113 (LFLS…VVAF), 131–151 (LLNG…HLIM), 158–178 (SLFY…LFIL), 217–237 (VSVI…VMGF), 247–267 (ALTA…LGLF), 271–291 (TLML…SLAH), 295–315 (VTLF…GVAM), 333–353 (LGIA…ILGI), and 358–378 (MLIG…FSVA).

This sequence belongs to the major facilitator superfamily. DHA1 family. MdtL (TC 2.A.1.2.22) subfamily.

The protein resides in the cell inner membrane. The sequence is that of Multidrug resistance protein MdtL from Salmonella agona (strain SL483).